The sequence spans 145 residues: Major pollen allergen Ole e 1 (145 aa).

3 disulfides stabilise this stretch: C19–C90, C22–C131, and C43–C78. A glycan (N-linked (GlcNAc...) (complex) asparagine; alternate) is linked at N111. N111 carries N-linked (GlcNAc...) (high mannose) asparagine; alternate glycosylation.

This sequence belongs to the Ole e I family. N-glycosylated; contains high mannose (Man(7)-GlcNAc) and partially fucosylated complex glycans (GlcNAc-Man(3)-Xyl-GlcNAc). Complex glycans may contribute to the antigenicity. Exists both in a glycosylated and in a non-glycosylated form. Ole e 1 and Ole e 1.0103 are the only non-glycosylated isoallergens. In terms of processing, a second potential glycosylation site exists at position 50 in cv. Bella de Espana and cv. Hojiblanca. In terms of tissue distribution, expressed in tapetum and pollen grains. Not detected in petals, roots or leaves.

The protein localises to the endoplasmic reticulum. It localises to the secreted. Functionally, may be involved in recognition between pollen-stigma and pollen tube-style cells. This is Major pollen allergen Ole e 1 from Olea europaea (Common olive).